The sequence spans 178 residues: Cell wall-binding protein YwsB (178 aa).

A signal peptide spans 1-30; that stretch reads MNKPTKLFSTLALAAGMTAAAAGGAGTIHA. SH3b domains lie at 47–111 and 116–178; these read IDSY…VKAA and TKTK…HMTK.

It localises to the secreted. The protein resides in the cell wall. Increases in stationary phase in a strain lacking the WprA protease. This chain is Cell wall-binding protein YwsB (ywsB), found in Bacillus subtilis (strain 168).